The primary structure comprises 284 residues: MNAWNTIYDQFNPIAFSLGGIEVHWYGLAYACAIVIAFYMALRMIQKDPERFPIERKEFESYFLWAELGIVLGARIGYVLIYEPNSSYYLTHFWQIFNPFDRHGNFVGIRGMSYHGGLVGFLIASYLYSRKDLKKLLIYLDLIAISLPLGYVFGRIGNFLNQELVGRVVPKDSHLGQIIGIMVDNQLRYPSQLIEAFLEGVIVFLMVLWAKKHTKTHGLLIVVYGLGYSLMRFIAEFYREPDSQMGVYFLNLSMGQILSLFMVVVSLGILLYATRHSKKIKENQ.

The next 7 helical transmembrane spans lie at 18-38 (LGGIEVHWYGLAYACAIVIAF), 62-82 (YFLWAELGIVLGARIGYVLIY), 106-126 (FVGIRGMSYHGGLVGFLIASY), 136-156 (LLIYLDLIAISLPLGYVFGRI), 190-210 (PSQLIEAFLEGVIVFLMVLWA), 218-238 (GLLIVVYGLGYSLMRFIAEFY), and 252-272 (LSMGQILSLFMVVVSLGILLY). A 1,2-diacyl-sn-glycero-3-phospho-(1'-sn-glycerol) is bound at residue Arg-155.

Belongs to the Lgt family.

It localises to the cell inner membrane. It catalyses the reaction L-cysteinyl-[prolipoprotein] + a 1,2-diacyl-sn-glycero-3-phospho-(1'-sn-glycerol) = an S-1,2-diacyl-sn-glyceryl-L-cysteinyl-[prolipoprotein] + sn-glycerol 1-phosphate + H(+). Its pathway is protein modification; lipoprotein biosynthesis (diacylglyceryl transfer). Its function is as follows. Catalyzes the transfer of the diacylglyceryl group from phosphatidylglycerol to the sulfhydryl group of the N-terminal cysteine of a prolipoprotein, the first step in the formation of mature lipoproteins. This chain is Phosphatidylglycerol--prolipoprotein diacylglyceryl transferase, found in Helicobacter pylori (strain G27).